The sequence spans 89 residues: MSRKCPLTGKRPRRGNSYTIRGIAKKKKGIGLKVTGKTKRRFFPNMVTKRLWSTEENKFLKLKISASALRLIDKLGLEKVIARAKSKGF.

This sequence belongs to the bacterial ribosomal protein bL28 family.

The sequence is that of Large ribosomal subunit protein bL28 from Chlamydia felis (strain Fe/C-56) (Chlamydophila felis).